The sequence spans 40 residues: Protein P4 (40 aa).

The helical transmembrane segment at 10–29 (KYFAYGVAISAAGAILAEYV) threads the bilayer.

It localises to the virion membrane. May interact with the viral DNA. The chain is Protein P4 (IV) from Pseudoalteromonas phage PM2 (Bacteriophage PM2).